The sequence spans 322 residues: 4-hydroxy-3-methylbut-2-enyl diphosphate reductase (322 aa).

C12 lines the [4Fe-4S] cluster pocket. The (2E)-4-hydroxy-3-methylbut-2-enyl diphosphate site is built by H43 and H81. Residues H43 and H81 each coordinate dimethylallyl diphosphate. The isopentenyl diphosphate site is built by H43 and H81. C103 lines the [4Fe-4S] cluster pocket. H131 is a (2E)-4-hydroxy-3-methylbut-2-enyl diphosphate binding site. Residue H131 coordinates dimethylallyl diphosphate. H131 provides a ligand contact to isopentenyl diphosphate. The active-site Proton donor is E133. T172 is a binding site for (2E)-4-hydroxy-3-methylbut-2-enyl diphosphate. C200 contacts [4Fe-4S] cluster. Residues S228, N230, and S273 each coordinate (2E)-4-hydroxy-3-methylbut-2-enyl diphosphate. 3 residues coordinate dimethylallyl diphosphate: S228, N230, and S273. Isopentenyl diphosphate contacts are provided by S228, N230, and S273.

It belongs to the IspH family. The cofactor is [4Fe-4S] cluster.

It carries out the reaction isopentenyl diphosphate + 2 oxidized [2Fe-2S]-[ferredoxin] + H2O = (2E)-4-hydroxy-3-methylbut-2-enyl diphosphate + 2 reduced [2Fe-2S]-[ferredoxin] + 2 H(+). It catalyses the reaction dimethylallyl diphosphate + 2 oxidized [2Fe-2S]-[ferredoxin] + H2O = (2E)-4-hydroxy-3-methylbut-2-enyl diphosphate + 2 reduced [2Fe-2S]-[ferredoxin] + 2 H(+). The protein operates within isoprenoid biosynthesis; dimethylallyl diphosphate biosynthesis; dimethylallyl diphosphate from (2E)-4-hydroxy-3-methylbutenyl diphosphate: step 1/1. Its pathway is isoprenoid biosynthesis; isopentenyl diphosphate biosynthesis via DXP pathway; isopentenyl diphosphate from 1-deoxy-D-xylulose 5-phosphate: step 6/6. Catalyzes the conversion of 1-hydroxy-2-methyl-2-(E)-butenyl 4-diphosphate (HMBPP) into a mixture of isopentenyl diphosphate (IPP) and dimethylallyl diphosphate (DMAPP). Acts in the terminal step of the DOXP/MEP pathway for isoprenoid precursor biosynthesis. The sequence is that of 4-hydroxy-3-methylbut-2-enyl diphosphate reductase from Macrococcus caseolyticus (strain JCSC5402) (Macrococcoides caseolyticum).